A 287-amino-acid polypeptide reads, in one-letter code: Protein UL24 homolog (287 aa).

Disordered stretches follow at residues 1–33 (MARR…FSRR) and 254–287 (RVGK…DSNL). Residues 16-33 (HRSRTRSKTAHHRKFSRR) show a composition bias toward basic residues.

This sequence belongs to the herpesviridae UL24 family.

The protein resides in the virion. It localises to the host cytoplasm. The protein localises to the host nucleus. It is found in the host nucleolus. Its subcellular location is the host Golgi apparatus. In terms of biological role, may participate in nuclear egress of viral particles. Plays a role in the dispersal of several host nucleolar proteins including NCL/nucleolin and NPM1. Since deletion of host NCL/nucleolin negatively impact on nuclear egress, UL24 supposedly acts on this process through its effect on host nucleoli. The polypeptide is Protein UL24 homolog (Infectious laryngotracheitis virus (strain Thorne V882) (ILTV)).